The sequence spans 191 residues: MITIKEKRKTRIGEEFIFSLKAPISFSNAIRRIMISEVPTFAIEDVYIYENSSSMDDEILAHRLGLIPIKGKPLLENEVITFTLEKEGPCTVYSSDLKSENGEVAFKNIPIVKLGKGQRIQIECEAIPGIGKVHAKWQPCNAVYKQIADDEVEFFVETFGQMEAEEILEEAVKILKNKAESFLQQLEMIEQ.

Belongs to the archaeal Rpo3/eukaryotic RPB3 RNA polymerase subunit family. In terms of assembly, part of the RNA polymerase complex. Interacts with Rpo12. Forms an Rpo3-Rpo10-Rpo11-Rpo12 complex upon coexpression.

It is found in the cytoplasm. It catalyses the reaction RNA(n) + a ribonucleoside 5'-triphosphate = RNA(n+1) + diphosphate. Its function is as follows. DNA-dependent RNA polymerase (RNAP) catalyzes the transcription of DNA into RNA using the four ribonucleoside triphosphates as substrates. In Methanocaldococcus jannaschii (strain ATCC 43067 / DSM 2661 / JAL-1 / JCM 10045 / NBRC 100440) (Methanococcus jannaschii), this protein is DNA-directed RNA polymerase subunit Rpo3.